A 414-amino-acid polypeptide reads, in one-letter code: Cyclic di-GMP phosphodiesterase PA4108 (414 aa).

One can recognise an HD-GYP domain in the interval 133–330 (ISASVLRHPN…YPVGALVRLE (198 aa)). His160, His192, Asp193, His221, His246, and His247 together coordinate a divalent metal cation.

In terms of assembly, monomer.

The enzyme catalyses 3',3'-c-di-GMP + 2 H2O = 2 GMP + 2 H(+). With respect to regulation, activated by Mg(2+) and Mn(2+). In terms of biological role, phosphodiesterase (PDE) that catalyzes the hydrolysis of cyclic diguanylate (c-di-GMP) to GMP. Hydrolyzes c-di-GMP to GMP in a two-step reaction, via the linear intermediate 5'-phosphoguanylyl(3'-&gt;5')guanosine (pGpG). In vitro, can use pGpG as an alternative substrate and hydrolyze it into GMP. Acts in regulation of motility, synthesis of virulence determinants and biofilm architecture. This is Cyclic di-GMP phosphodiesterase PA4108 from Pseudomonas aeruginosa (strain ATCC 15692 / DSM 22644 / CIP 104116 / JCM 14847 / LMG 12228 / 1C / PRS 101 / PAO1).